An 82-amino-acid chain; its full sequence is MMQRVAKLSVQTASRVSFKTCTNNFSAATATKSTSSGSVPSFFTESTSTPLNQSKTNTSTLNKSSKLNNNLIDNIMYVYFIY.

Residues 29–38 are compositionally biased toward low complexity; it reads TATKSTSSGS. The segment at 29-64 is disordered; sequence TATKSTSSGSVPSFFTESTSTPLNQSKTNTSTLNKS. Polar residues predominate over residues 39-50; that stretch reads VPSFFTESTSTP. Residues 51–64 show a composition bias toward low complexity; that stretch reads LNQSKTNTSTLNKS.

This is an uncharacterized protein from Dictyostelium discoideum (Social amoeba).